The sequence spans 358 residues: N-acylethanolamine-hydrolyzing acid amidase (358 aa).

Positions 1-26 are cleaved as a signal peptide; the sequence is MQGTGHPVRPVLELLLLLLLLAGVGG. Residues Asn39 and Asn108 are each glycosylated (N-linked (GlcNAc...) asparagine). The active-site Nucleophile is Cys127. N-linked (GlcNAc...) asparagine glycosylation is found at Asn310, Asn334, and Asn356.

The protein belongs to the acid ceramidase family. As to quaternary structure, heterodimer of an alpha and a beta subunit, produced by autocatalytic cleavage. In terms of processing, N-glycosylated. Tunicamycin treatment causes a reduction in specific activity against N-palmitoylethanolamine. Post-translationally, autoproteolytic cleavage at pH 4.5 gives rise to the alpha and beta subunit. Cleavage gives rise to a conformation change that activates the enzyme. The same catalytic Cys residue mediates the autoproteolytic cleavage and subsequent hydrolysis of lipid substrates.

It localises to the lysosome. Its subcellular location is the membrane. The catalysed reaction is N-hexadecanoylethanolamine + H2O = ethanolamine + hexadecanoate. It carries out the reaction an N-(long-chain fatty acyl)ethanolamine + H2O = a long-chain fatty acid + ethanolamine. It catalyses the reaction N-dodecanoylethanolamine + H2O = dodecanoate + ethanolamine. The enzyme catalyses N-tetradecanoylethanolamine + H2O = tetradecanoate + ethanolamine. The catalysed reaction is an N-acylsphing-4-enine + H2O = sphing-4-enine + a fatty acid. It carries out the reaction N-hexadecanoylsphing-4-enine + H2O = sphing-4-enine + hexadecanoate. It catalyses the reaction N-dodecanoylsphing-4-enine + H2O = dodecanoate + sphing-4-enine. Its pathway is lipid metabolism; fatty acid metabolism. In terms of biological role, degrades bioactive fatty acid amides to their corresponding acids, with the following preference: N-palmitoylethanolamine &gt; N-myristoylethanolamine &gt; N-stearoylethanolamine &gt; N-oleoylethanolamine &gt; N-linoleoylethanolamine &gt; N-arachidonoylethanolamine. This Oryctolagus cuniculus (Rabbit) protein is N-acylethanolamine-hydrolyzing acid amidase.